A 119-amino-acid chain; its full sequence is UPF0145 protein Ta0182 (119 aa).

Belongs to the UPF0145 family.

This chain is UPF0145 protein Ta0182, found in Thermoplasma acidophilum (strain ATCC 25905 / DSM 1728 / JCM 9062 / NBRC 15155 / AMRC-C165).